The chain runs to 455 residues: Ribulose bisphosphate carboxylase large chain (455 aa).

Lys-5 carries the N6,N6,N6-trimethyllysine modification. Residues Asn-114 and Thr-164 each contribute to the substrate site. The active-site Proton acceptor is the Lys-166. Lys-168 is a binding site for substrate. Mg(2+) contacts are provided by Lys-192, Asp-194, and Glu-195. Lys-192 carries the post-translational modification N6-carboxylysine. His-285 functions as the Proton acceptor in the catalytic mechanism. Substrate contacts are provided by Arg-286, His-318, and Ser-370.

This sequence belongs to the RuBisCO large chain family. Type I subfamily. As to quaternary structure, heterohexadecamer of 8 large chains and 8 small chains; disulfide-linked. The disulfide link is formed within the large subunit homodimers. Requires Mg(2+) as cofactor. In terms of processing, the disulfide bond which can form in the large chain dimeric partners within the hexadecamer appears to be associated with oxidative stress and protein turnover.

Its subcellular location is the plastid. It is found in the chloroplast. It catalyses the reaction 2 (2R)-3-phosphoglycerate + 2 H(+) = D-ribulose 1,5-bisphosphate + CO2 + H2O. The enzyme catalyses D-ribulose 1,5-bisphosphate + O2 = 2-phosphoglycolate + (2R)-3-phosphoglycerate + 2 H(+). In terms of biological role, ruBisCO catalyzes two reactions: the carboxylation of D-ribulose 1,5-bisphosphate, the primary event in carbon dioxide fixation, as well as the oxidative fragmentation of the pentose substrate in the photorespiration process. Both reactions occur simultaneously and in competition at the same active site. In Vachellia farnesiana (Sweet acacia), this protein is Ribulose bisphosphate carboxylase large chain.